Consider the following 31-residue polypeptide: Aspartate aminotransferase, cytoplasmic (31 aa).

Belongs to the class-I pyridoxal-phosphate-dependent aminotransferase family. In terms of assembly, homodimer. It depends on pyridoxal 5'-phosphate as a cofactor.

Its subcellular location is the cytoplasm. The catalysed reaction is L-aspartate + 2-oxoglutarate = oxaloacetate + L-glutamate. It carries out the reaction L-cysteine + 2-oxoglutarate = 2-oxo-3-sulfanylpropanoate + L-glutamate. It catalyses the reaction (2S)-2-aminobutanoate + 2-oxoglutarate = 2-oxobutanoate + L-glutamate. The enzyme catalyses 3-sulfino-L-alanine + 2-oxoglutarate = 3-sulfinopyruvate + L-glutamate. Its function is as follows. Biosynthesis of L-glutamate from L-aspartate or L-cysteine. Important regulator of levels of glutamate, the major excitatory neurotransmitter of the vertebrate central nervous system. Acts as a scavenger of glutamate in brain neuroprotection. The aspartate aminotransferase activity is involved in hepatic glucose synthesis during development and in adipocyte glyceroneogenesis. Using L-cysteine as substrate, regulates levels of mercaptopyruvate, an important source of hydrogen sulfide. Mercaptopyruvate is converted into H(2)S via the action of 3-mercaptopyruvate sulfurtransferase (3MST). Hydrogen sulfide is an important synaptic modulator and neuroprotectant in the brain. The polypeptide is Aspartate aminotransferase, cytoplasmic (Oryctolagus cuniculus (Rabbit)).